Here is a 262-residue protein sequence, read N- to C-terminus: Small ribosomal subunit protein uS3 (262 aa).

Positions 38–106 (LRKIIAKELE…KVKLNIQEIH (69 aa)) constitute a KH type-2 domain. Positions 211–262 (KGQTQLPQPAVAAARPGLTVEEEERPQRKGGRGGRGANAGAARGGRGGRSRS) are disordered. The segment covering 243 to 255 (GGRGANAGAARGG) has biased composition (gly residues).

It belongs to the universal ribosomal protein uS3 family. As to quaternary structure, part of the 30S ribosomal subunit. Forms a tight complex with proteins S10 and S14.

Functionally, binds the lower part of the 30S subunit head. Binds mRNA in the 70S ribosome, positioning it for translation. This chain is Small ribosomal subunit protein uS3, found in Roseiflexus sp. (strain RS-1).